Reading from the N-terminus, the 441-residue chain is L-seryl-tRNA(Sec) selenium transferase (441 aa).

Residue lysine 283 is modified to N6-(pyridoxal phosphate)lysine.

This sequence belongs to the SelA family. Pyridoxal 5'-phosphate is required as a cofactor.

The protein resides in the cytoplasm. It catalyses the reaction L-seryl-tRNA(Sec) + selenophosphate + H(+) = L-selenocysteinyl-tRNA(Sec) + phosphate. The protein operates within aminoacyl-tRNA biosynthesis; selenocysteinyl-tRNA(Sec) biosynthesis; selenocysteinyl-tRNA(Sec) from L-seryl-tRNA(Sec) (bacterial route): step 1/1. Functionally, converts seryl-tRNA(Sec) to selenocysteinyl-tRNA(Sec) required for selenoprotein biosynthesis. This chain is L-seryl-tRNA(Sec) selenium transferase, found in Campylobacter concisus (strain 13826).